The primary structure comprises 856 residues: V-type proton ATPase 116 kDa subunit a 2 (856 aa).

Over 1-393 the chain is Cytoplasmic; the sequence is MGSLFRSESM…DAYGVGSYRE (393 aa). A helical membrane pass occupies residues 394–412; it reads VNPALFTIITFPFLFAVMF. At 413–414 the chain is on the vacuolar side; the sequence is GD. A helical transmembrane segment spans residues 415–431; sequence FGHGFVMFLFALLLVLN. Residues 432-445 lie on the Cytoplasmic side of the membrane; sequence ENHPRLSQSQEILR. A helical membrane pass occupies residues 446–475; sequence MFFDGRYILLLMGLFSVYTGLIYNDCFSKS. Residues 476-549 lie on the Vacuolar side of the membrane; the sequence is VNLFGSGWNV…ATNRLTFLNS (74 aa). A helical transmembrane segment spans residues 550–569; the sequence is FKMKMSVILGIFHMTFGVVL. Residues 570 to 587 are Cytoplasmic-facing; sequence GIFNHLHFRKKFNVYLVS. Residues 588 to 608 traverse the membrane as a helical segment; that stretch reads VPEILFMLCIFGYLIFMIIYK. Over 609-651 the chain is Vacuolar; sequence WLAYSAETSREAPSILIEFINMFLFPTSKTHGLYPGQAHVQRV. A helical transmembrane segment spans residues 652–671; that stretch reads LVALTVLAVPVLFLGKPLFL. Over 672 to 739 the chain is Cytoplasmic; sequence LWLHNGRNCF…EILMTQAIHS (68 aa). Ser-695 and Ser-700 each carry phosphoserine. Residues 740 to 764 form a helical membrane-spanning segment; sequence IEYCLGCISNTASYLRLWALSLAHA. The Vacuolar segment spans residues 765 to 785; the sequence is QLSDVLWAMLMRVGLRVDTTY. The helical transmembrane segment at 786–824 threads the bilayer; it reads GVLLLLPVMAFFAVLTIFILLVMEGLSAFLHAIRLHWVE. Residues 825–856 are Cytoplasmic-facing; sequence FQNKFYVGAGTKFVPFSFSLLSSKFSNDDSIA.

It belongs to the V-ATPase 116 kDa subunit family. In terms of assembly, V-ATPase is a heteromultimeric enzyme made up of two complexes: the ATP-hydrolytic V1 complex and the proton translocation V0 complex. The V1 complex consists of three catalytic AB heterodimers that form a heterohexamer, three peripheral stalks each consisting of EG heterodimers, one central rotor including subunits D and F, and the regulatory subunits C and H. The proton translocation complex V0 consists of the proton transport subunit a, a ring of proteolipid subunits c9c'', rotary subunit d, subunits e and f, and the accessory subunits ATP6AP1/Ac45 and ATP6AP2/PRR. Directly interacts with PSCD2 through its N-terminal cytosolic tail in an intra-endosomal acidification-dependent manner. Disruption of this interaction results in the inhibition of endocytosis. Interacts with SPAAR. As to expression, relatively high expression in kidney and liver. Lower levels in the spleen, testis, and skeletal muscle. Also expressed in the thymus.

The protein resides in the cell membrane. It localises to the endosome membrane. Its function is as follows. Subunit of the V0 complex of vacuolar(H+)-ATPase (V-ATPase), a multisubunit enzyme composed of a peripheral complex (V1) that hydrolyzes ATP and a membrane integral complex (V0) that translocates protons. V-ATPase is responsible for acidifying and maintaining the pH of intracellular compartments and in some cell types, is targeted to the plasma membrane, where it is responsible for acidifying the extracellular environment. Essential component of the endosomal pH-sensing machinery. May play a role in maintaining the Golgi functions, such as glycosylation maturation, by controlling the Golgi pH. In aerobic conditions, involved in intracellular iron homeostasis, thus triggering the activity of Fe(2+) prolyl hydroxylase (PHD) enzymes, and leading to HIF1A hydroxylation and subsequent proteasomal degradation. The protein is V-type proton ATPase 116 kDa subunit a 2 (Atp6v0a2) of Mus musculus (Mouse).